The primary structure comprises 362 residues: Ferredoxin--NADP reductase, leaf-type isozyme, chloroplastic (362 aa).

Positions 1 to 20 are disordered; sequence MATAVSAAVSLPSSKSTSFS. The N-terminal 62 residues, 1–62, are a transit peptide targeting the chloroplast; it reads MATAVSAAVS…RAQVTTEAPA (62 aa). Over residues 10 to 20 the composition is skewed to low complexity; that stretch reads SLPSSKSTSFS. The 123-residue stretch at 83 to 205 folds into the FAD-binding FR-type domain; sequence KEPYVGRCLL…TGPVGKEMLM (123 aa). Residues 141–144, 162–164, Y168, 179–181, and T220 each bind FAD; these read RLYS, CVK, and VCS. Residues S144 and K164 each contribute to the NADP(+) site. Residues T220, 252–253, 282–283, K292, 321–322, and E360 each bind NADP(+); these read VP, SR, and GL.

This sequence belongs to the ferredoxin--NADP reductase type 1 family. Requires FAD as cofactor.

It localises to the plastid. The protein resides in the chloroplast stroma. It is found in the chloroplast thylakoid membrane. It catalyses the reaction 2 reduced [2Fe-2S]-[ferredoxin] + NADP(+) + H(+) = 2 oxidized [2Fe-2S]-[ferredoxin] + NADPH. It functions in the pathway energy metabolism; photosynthesis. May play a key role in regulating the relative amounts of cyclic and non-cyclic electron flow to meet the demands of the plant for ATP and reducing power. In Nicotiana tabacum (Common tobacco), this protein is Ferredoxin--NADP reductase, leaf-type isozyme, chloroplastic (PETH).